Here is a 284-residue protein sequence, read N- to C-terminus: MDGRAVAPAAGTVLNALATGVGAAFALDIDTEASVSVTPSESGVSGEIAGHPEADTALVERCVSRVIDRYGDGQGGHVRTESEVPLAAGLKSSSAAANATVLATLDALGVADEVDRVDAARLGVQAARDAGVTVTGAFDDAAASMLGGVAMTDNREDDLLFRDAVEWHAAVWTPPERAYSADADVARCERVSGLAEHVAALAAAGDYGTAMTVNGLAFCAALDFPTAPAVTALPHAAGVSLSGTGPSYVAVGDEDGIEEVSTRWHENPGTVRETTTQLAGARTT.

ATP is bound at residue 85–95 (PLAAGLKSSSA).

It belongs to the GHMP kinase family. Archaeal shikimate kinase subfamily.

Its subcellular location is the cytoplasm. It carries out the reaction shikimate + ATP = 3-phosphoshikimate + ADP + H(+). Its pathway is metabolic intermediate biosynthesis; chorismate biosynthesis; chorismate from D-erythrose 4-phosphate and phosphoenolpyruvate: step 5/7. This chain is Shikimate kinase, found in Halobacterium salinarum (strain ATCC 29341 / DSM 671 / R1).